The sequence spans 245 residues: MSVHSKLYEGKAKILYTTDEPEVLLADFKDDATAFNAQKRGSILGKGRINCSISSQLFQQLEASGIKTHFIDSPSPNQMRVKAVKIIPIEVVIRNIAAGSLSQQTGIELGTVLKQPLVEFYYKNDQLGDPLLTRDRLLLMELATAEQVEEITHLALQINDFLKNFWQNCGITLVDFKLEFGLDSQQQILLADEISPDTCRLWNTTEADPNRRVMDKDRFRRDLGNVEDAYQEVLQRVLTAVEIKN.

Belongs to the SAICAR synthetase family.

The enzyme catalyses 5-amino-1-(5-phospho-D-ribosyl)imidazole-4-carboxylate + L-aspartate + ATP = (2S)-2-[5-amino-1-(5-phospho-beta-D-ribosyl)imidazole-4-carboxamido]succinate + ADP + phosphate + 2 H(+). It functions in the pathway purine metabolism; IMP biosynthesis via de novo pathway; 5-amino-1-(5-phospho-D-ribosyl)imidazole-4-carboxamide from 5-amino-1-(5-phospho-D-ribosyl)imidazole-4-carboxylate: step 1/2. This is Phosphoribosylaminoimidazole-succinocarboxamide synthase from Trichormus variabilis (strain ATCC 29413 / PCC 7937) (Anabaena variabilis).